We begin with the raw amino-acid sequence, 290 residues long: TP53-target gene 5 protein (290 aa).

The segment covering 1-13 (MSPSAKKRPKNSR) has biased composition (basic residues). Disordered stretches follow at residues 1–29 (MSPS…TEQP) and 114–178 (KLES…RQPL). Basic and acidic residues-rich tracts occupy residues 16–26 (KMQDEKLRDET), 114–130 (KLES…KEWK), and 138–167 (RNKE…RDDS).

In terms of assembly, interacts with p53/TP53. As to expression, highly expressed in heart, brain and small intestine. Less abundant in skeletal muscle, spleen, prostate, ovary and colon. A smaller transcript is expressed specifically in the testis.

It is found in the cytoplasm. The protein localises to the nucleus. May play a significant role in p53/TP53-mediating signaling pathway. This is TP53-target gene 5 protein (TP53TG5) from Homo sapiens (Human).